The chain runs to 708 residues: Leukotoxin translocation ATP-binding protein LktB (708 aa).

The Peptidase C39 domain maps to 1–126 (MEANHQRNDL…ACYQGQLILV (126 aa)). An ABC transmembrane type-1 domain is found at 155 to 437 (FLETLIVSIF…LAQLWQDFQQ (283 aa)). The next 5 helical transmembrane spans lie at 159–179 (LIVS…FQVV), 192–212 (LNII…LSGL), 270–290 (ALTS…MWYY), 296–316 (LVIL…SPIL), and 389–409 (VMVI…LSIG). The region spanning 469-704 (ISFKNIRFRY…SNGLYSYLHQ (236 aa)) is the ABC transporter domain. 503–510 (GRSGSGKS) is an ATP binding site.

Belongs to the ABC transporter superfamily. Protein-1 exporter (TC 3.A.1.109) family. In terms of assembly, homodimer.

The protein resides in the cell inner membrane. The catalysed reaction is ATP + H2O + proteinSide 1 = ADP + phosphate + proteinSide 2.. Its function is as follows. Part of the ABC transporter complex LktBD involved in leukotoxin export. Transmembrane domains (TMD) form a pore in the inner membrane and the ATP-binding domain (NBD) is responsible for energy generation. This is Leukotoxin translocation ATP-binding protein LktB (lktB) from Bibersteinia trehalosi (Pasteurella trehalosi).